We begin with the raw amino-acid sequence, 609 residues long: ATP-dependent RNA helicase has1 (609 aa).

The tract at residues 1-131 is disordered; the sequence is MPAAVDTAKT…QPDGGPKKFT (131 aa). Residues 11–21 are compositionally biased toward basic residues; it reads ISKKRKRKHGG. The span at 51–69 shows a compositional bias: basic and acidic residues; sequence LTKDKDVELAKKVVKEEAQ. Residues 80–97 are compositionally biased toward acidic residues; it reads DEEESESEDEEKKEEDEK. Residues 128 to 156 carry the Q motif motif; sequence KKFTELGLSEKTLQGIKEMGFETMTEIQQ. A Helicase ATP-binding domain is found at 159-335; the sequence is IPPLLAGRDV…RISLRPGPLY (177 aa). 172–179 is a binding site for ATP; that stretch reads AKTGSGKT. A DEAD box motif is present at residues 282–285; that stretch reads DEAD. Residues 349–519 enclose the Helicase C-terminal domain; it reads GLEQGYVICE…NVQSQLEKLI (171 aa). The Bipartite nuclear localization signal signature appears at 361–377; that stretch reads KRFLLLFSFLKRNLKKK. Residues 576–609 are disordered; it reads GSSLSRDKKQQQQGRRSYGSQPKGLKFKRKHEDD. Over residues 586-596 the composition is skewed to low complexity; the sequence is QQQGRRSYGSQ. A compositionally biased stretch (basic residues) spans 600-609; sequence LKFKRKHEDD.

This sequence belongs to the DEAD box helicase family. DDX18/HAS1 subfamily. As to quaternary structure, associates in the nucleolus with the 60S and pre-60S ribosomal subunits.

The protein resides in the nucleus. It is found in the nucleolus. The catalysed reaction is ATP + H2O = ADP + phosphate + H(+). ATP-dependent RNA helicase involved in 40S ribosomal subunit biogenesis. Required for the processing and cleavage of 35S pre-rRNA at sites A0, A1, and A2, leading to mature 18S rRNA. The sequence is that of ATP-dependent RNA helicase has1 (has1) from Emericella nidulans (strain FGSC A4 / ATCC 38163 / CBS 112.46 / NRRL 194 / M139) (Aspergillus nidulans).